The sequence spans 332 residues: HTH-type transcriptional regulator IdnR (332 aa).

In terms of domain architecture, HTH lacI-type spans 6–60 (ISLQDIATLAGVTKMTVSRYIRSPKKVAKETGERIAKIMEEINYIPNRAPGMLLN). The H-T-H motif DNA-binding region spans 8-27 (LQDIATLAGVTKMTVSRYIR).

In terms of biological role, idn operon regulator. May repress gntKU and gntT genes when growing on L-idonate. The chain is HTH-type transcriptional regulator IdnR (idnR) from Escherichia coli (strain K12).